The following is a 397-amino-acid chain: Phosphoglycerate kinase (397 aa).

Substrate is bound by residues D25–N27, R41, H64–R67, R118, and R151. ATP is bound by residues K202, E324, and G350–T353.

It belongs to the phosphoglycerate kinase family. In terms of assembly, monomer.

The protein resides in the cytoplasm. It carries out the reaction (2R)-3-phosphoglycerate + ATP = (2R)-3-phospho-glyceroyl phosphate + ADP. It participates in carbohydrate degradation; glycolysis; pyruvate from D-glyceraldehyde 3-phosphate: step 2/5. The sequence is that of Phosphoglycerate kinase from Acidovorax sp. (strain JS42).